A 1176-amino-acid chain; its full sequence is Growth-differentiation transition protein 5 (1176 aa).

A signal peptide spans 1-25 (MKNNFFKKTIILLIFLSIFILYSNA). Over 26–913 (DEETITTPPG…DVPANENTLN (888 aa)) the chain is Extracellular. The chain crosses the membrane as a helical span at residues 914–934 (LLTIVLPICSAVVVASSVMLG). Over 935 to 1176 (RLFYKKKFKK…NVGYNVHEYF (242 aa)) the chain is Cytoplasmic. Composition is skewed to low complexity over residues 965-974 (SNIENKSESI) and 1053-1066 (PQIS…SIPS). 2 disordered regions span residues 965-985 (SNIE…EQKE) and 1050-1080 (VDTP…PPST). A compositionally biased stretch (pro residues) spans 1067 to 1078 (SSPPPPPLPLPP).

It belongs to the GDT family.

Its subcellular location is the membrane. In Dictyostelium discoideum (Social amoeba), this protein is Growth-differentiation transition protein 5 (gdt5).